Here is a 147-residue protein sequence, read N- to C-terminus: Ubiquitin-conjugating enzyme E2 D2 (147 aa).

In terms of domain architecture, UBC core spans 1-147 (MALKRIHKEL…SREWTQKYAM (147 aa)). The active-site Glycyl thioester intermediate is the Cys-85.

Belongs to the ubiquitin-conjugating enzyme family. As to quaternary structure, interacts with SCF (SKP1-CUL1-F-box protein) E3 ubiquitin ligase complex. Interacts with CNOT4 (via RING domain). Interacts with E3 ubiquitin-protein ligases CBLC, PJA1 and PJA2. Interacts with PDZRN3. Interacts with PPP1R11. Interacts with E3 ubiquitin-protein ligase PHF7; the interaction inhibits cleavage of PHF7 and promotes association of the complex with the nucleosome core particle.

The enzyme catalyses S-ubiquitinyl-[E1 ubiquitin-activating enzyme]-L-cysteine + [E2 ubiquitin-conjugating enzyme]-L-cysteine = [E1 ubiquitin-activating enzyme]-L-cysteine + S-ubiquitinyl-[E2 ubiquitin-conjugating enzyme]-L-cysteine.. It catalyses the reaction S-ubiquitinyl-[E1 ubiquitin-activating enzyme]-L-cysteine + [acceptor protein]-L-lysine = [E1 ubiquitin-activating enzyme]-L-cysteine + N(6)-monoubiquitinyl-[acceptor protein]-L-lysine.. It functions in the pathway protein modification; protein ubiquitination. Accepts ubiquitin from the E1 complex and catalyzes its covalent attachment to other proteins. In vitro catalyzes 'Lys-48'-linked polyubiquitination. Mediates the selective degradation of short-lived and abnormal proteins. Functions in the E6/E6-AP-induced ubiquitination of p53/TP53. Mediates ubiquitination of PEX5 and SQSTM1 and autoubiquitination of STUB1 and TRAF6. Involved in the signal-induced conjugation and subsequent degradation of NFKBIA, FBXW2-mediated GCM1 ubiquitination and degradation, MDM2-dependent degradation of p53/TP53 and the activation of MAVS in the mitochondria by RIGI in response to viral infection. Essential for viral activation of IRF3. This chain is Ubiquitin-conjugating enzyme E2 D2 (UBE2D2), found in Sus scrofa (Pig).